The following is a 234-amino-acid chain: Toxic shock syndrome toxin-1 (234 aa).

Residues 1–40 (MNKKLLMNFFIVSPLLLATTATDFTPVPLSSNQIIKTAKA) form the signal peptide.

The protein belongs to the staphylococcal/streptococcal toxin family.

The protein resides in the secreted. Its function is as follows. Responsible for the symptoms of toxic shock syndrome. The chain is Toxic shock syndrome toxin-1 (tst) from Staphylococcus aureus.